A 437-amino-acid polypeptide reads, in one-letter code: Enolase (437 aa).

Gln-162 lines the (2R)-2-phosphoglycerate pocket. The Proton donor role is filled by Glu-204. Mg(2+) contacts are provided by Asp-251, Glu-297, and Asp-324. (2R)-2-phosphoglycerate-binding residues include Lys-349, Arg-378, Ser-379, and Lys-400. Lys-349 serves as the catalytic Proton acceptor.

The protein belongs to the enolase family. Requires Mg(2+) as cofactor.

Its subcellular location is the cytoplasm. It is found in the secreted. The protein localises to the cell surface. It carries out the reaction (2R)-2-phosphoglycerate = phosphoenolpyruvate + H2O. The protein operates within carbohydrate degradation; glycolysis; pyruvate from D-glyceraldehyde 3-phosphate: step 4/5. Functionally, catalyzes the reversible conversion of 2-phosphoglycerate (2-PG) into phosphoenolpyruvate (PEP). It is essential for the degradation of carbohydrates via glycolysis. The polypeptide is Enolase (Chlorobium luteolum (strain DSM 273 / BCRC 81028 / 2530) (Pelodictyon luteolum)).